The primary structure comprises 242 residues: MANVSMRDMLQAGVHFGHQARYWNPKMKPFIFGTRNRVHIINLEQTVPMFNTALKFLSGAAANKGKVLFVGTKRAASEAVKESAIASDQYYVNHRWLGGMLTNWKTVRQSIKRLKDLEIQSQDGTFEKLTKKETLMLNREMEKLEKSLGGIKNMGGLPDALFVIDADHEHIAIREANNLGIPVVAIVDTNSNPDGVDFIVPGNDDAIRAVSLYTNAVATAITEGRENTLVAQAEKDDFVEAE.

It belongs to the universal ribosomal protein uS2 family.

The sequence is that of Small ribosomal subunit protein uS2 from Pseudoalteromonas translucida (strain TAC 125).